Consider the following 211-residue polypeptide: Arginine exporter protein ArgO (211 aa).

A run of 6 helical transmembrane segments spans residues 1–21 (MISY…PLGP), 37–57 (LMIA…GIFG), 68–88 (LLAL…FGAL), 111–131 (IIAT…DTFV), 147–167 (WFAL…ALLA), and 179–199 (AQRI…FQLA).

Belongs to the LysE/ArgO transporter (TC 2.A.75) family.

The protein resides in the cell inner membrane. It carries out the reaction L-arginine(in) = L-arginine(out). Functionally, involved in the export of arginine. Important to control the intracellular level of arginine and the correct balance between arginine and lysine. The chain is Arginine exporter protein ArgO from Salmonella paratyphi B (strain ATCC BAA-1250 / SPB7).